Reading from the N-terminus, the 793-residue chain is uncharacterized protein (793 aa).

The first 22 residues, 1 to 22, serve as a signal peptide directing secretion; sequence MKFKYGAIFFSGFLGLSAILAA. A lipid anchor (N-palmitoyl cysteine) is attached at cysteine 23. Cysteine 23 is lipidated: S-diacylglycerol cysteine. Disordered regions lie at residues 181–200, 212–264, and 444–504; these read LNQKMTSSSEGKNSSGTLTV, KIED…DDQV, and KAPS…SNNN. A compositionally biased stretch (basic and acidic residues) spans 212–227; sequence KIEDSAKANGKSDEKG. Residues 237–246 show a composition bias toward polar residues; sequence ATFSLVQLKQ. Residues 247-264 are compositionally biased toward basic and acidic residues; the sequence is TQEKTDDSQDTKNSDDQV. The span at 449–468 shows a compositional bias: polar residues; the sequence is NGENGQTNEGNSTNGEQNLL. Over residues 472–485 the composition is skewed to basic and acidic residues; it reads EVKDDSKPKEEVKS. Positions 491 to 504 are enriched in low complexity; it reads KESSQNQGKKSNNN.

Belongs to the MG185/MG260 family.

It is found in the cell membrane. This is an uncharacterized protein from Mycoplasma pneumoniae (strain ATCC 29342 / M129 / Subtype 1) (Mycoplasmoides pneumoniae).